The following is a 430-amino-acid chain: MHPSTPISSLFSFTSPAVKRLLGWKQGDEEEKWAEKAVDSLVKKLKKKKGAMDELERALSCPGQPSKCVTIPRSLDGRLQVSHRKGLPHVIYCRVWRWPDLQSHHELKPLECCEFPFGSKQKEVCINPYHYRRVETPVLPPVLVPRHSEYNPQLSLLAKFRSASLHSEPLMPHNATYPDSFQQSLCPAPPSSPGHVFPQSPCPTSYPHSPGSPSESDSPYQHSDFRPVCYEEPQHWCSVAYYELNNRVGETFQASSRSVLIDGFTDPSNNRNRFCLGLLSNVNRNSTIENTRRHIGKGVHLYYVGGEVYAECVSDSSIFVQSRNCNYQHGFHPATVCKIPSGCSLKVFNNQLFAQLLAQSVHHGFEVVYELTKMCTIRMSFVKGWGAEYHRQDVTSTPCWIEIHLHGPLQWLDKVLTQMGSPHNPISSVS.

An MH1 domain is found at 16–140 (PAVKRLLGWK…YRRVETPVLP (125 aa)). Positions 68, 113, 125, and 130 each coordinate Zn(2+). The disordered stretch occupies residues 186–222 (CPAPPSSPGHVFPQSPCPTSYPHSPGSPSESDSPYQH). Over residues 202 to 221 (CPTSYPHSPGSPSESDSPYQ) the composition is skewed to polar residues. Residues 236-430 (WCSVAYYELN…SPHNPISSVS (195 aa)) enclose the MH2 domain.

Belongs to the dwarfin/SMAD family. In terms of assembly, interaction with the co-SMAD SMAD4. Interacts with PEBP2-alpha subunit. Interacts with RANBP3L. Phosphorylated on serine by BMP (bone morphogenetic proteins) type 1 receptor kinase and activin type I receptor-like kinases (ALK-2, ALK-3 and ALK-6).

Its subcellular location is the cytoplasm. It is found in the nucleus. Transcriptional modulator activated by BMP (bone morphogenetic proteins) type 1 receptor kinase. SMAD9 is a receptor-regulated SMAD (R-SMAD). Has been shown to be activated by activin type I receptor-like kinases (ALK-2, ALK-3, ALK-6) which stimulate heteromerization between SMAD9 and SMAD4. May play a role in osteoblast differentiation and maturation. The sequence is that of Mothers against decapentaplegic homolog 9 (Smad9) from Mus musculus (Mouse).